Here is a 321-residue protein sequence, read N- to C-terminus: Lipoyl synthase (321 aa).

Positions 68, 73, 79, 94, 98, 101, and 308 each coordinate [4Fe-4S] cluster. The 218-residue stretch at 80–297 (FNHGTATFMI…KEIALELGFT (218 aa)) folds into the Radical SAM core domain.

The protein belongs to the radical SAM superfamily. Lipoyl synthase family. The cofactor is [4Fe-4S] cluster.

Its subcellular location is the cytoplasm. The enzyme catalyses [[Fe-S] cluster scaffold protein carrying a second [4Fe-4S](2+) cluster] + N(6)-octanoyl-L-lysyl-[protein] + 2 oxidized [2Fe-2S]-[ferredoxin] + 2 S-adenosyl-L-methionine + 4 H(+) = [[Fe-S] cluster scaffold protein] + N(6)-[(R)-dihydrolipoyl]-L-lysyl-[protein] + 4 Fe(3+) + 2 hydrogen sulfide + 2 5'-deoxyadenosine + 2 L-methionine + 2 reduced [2Fe-2S]-[ferredoxin]. It functions in the pathway protein modification; protein lipoylation via endogenous pathway; protein N(6)-(lipoyl)lysine from octanoyl-[acyl-carrier-protein]: step 2/2. In terms of biological role, catalyzes the radical-mediated insertion of two sulfur atoms into the C-6 and C-8 positions of the octanoyl moiety bound to the lipoyl domains of lipoate-dependent enzymes, thereby converting the octanoylated domains into lipoylated derivatives. This Vibrio atlanticus (strain LGP32) (Vibrio splendidus (strain Mel32)) protein is Lipoyl synthase.